A 156-amino-acid chain; its full sequence is ATP synthase subunit b (156 aa).

A helical membrane pass occupies residues 7–29; the sequence is LIGQMGTFLVFWWFVNKVIWPMF.

The protein belongs to the ATPase B chain family. In terms of assembly, F-type ATPases have 2 components, F(1) - the catalytic core - and F(0) - the membrane proton channel. F(1) has five subunits: alpha(3), beta(3), gamma(1), delta(1), epsilon(1). F(0) has three main subunits: a(1), b(2) and c(10-14). The alpha and beta chains form an alternating ring which encloses part of the gamma chain. F(1) is attached to F(0) by a central stalk formed by the gamma and epsilon chains, while a peripheral stalk is formed by the delta and b chains.

It is found in the cell inner membrane. Functionally, f(1)F(0) ATP synthase produces ATP from ADP in the presence of a proton or sodium gradient. F-type ATPases consist of two structural domains, F(1) containing the extramembraneous catalytic core and F(0) containing the membrane proton channel, linked together by a central stalk and a peripheral stalk. During catalysis, ATP synthesis in the catalytic domain of F(1) is coupled via a rotary mechanism of the central stalk subunits to proton translocation. Component of the F(0) channel, it forms part of the peripheral stalk, linking F(1) to F(0). This chain is ATP synthase subunit b, found in Dichelobacter nodosus (strain VCS1703A).